The primary structure comprises 439 residues: Oocyte zinc finger protein XlCOF28 (439 aa).

9 consecutive C2H2-type zinc fingers follow at residues 6–28, 34–56, 62–84, 90–112, 118–140, 146–168, 174–196, 202–224, and 230–252; these read YECT…QRTH, FKCT…KKCH, YMCT…IRTH, FTCT…LRIH, HKCN…QRTH, FQCT…LRIH, YKCS…QRTH, FQCS…ERTH, and YKCS…QKTH. Disordered regions lie at residues 246–275 and 285–304; these read KLHQ…APKT and AGLE…ESPE. 4 C2H2-type zinc fingers span residues 333-355, 361-383, 389-411, and 417-439; these read HKCT…QRTH, FKCS…RKIH, YTCA…RRTH, and YICA…QRIH.

The protein belongs to the krueppel C2H2-type zinc-finger protein family.

The protein resides in the nucleus. Functionally, may be involved in transcriptional regulation. This chain is Oocyte zinc finger protein XlCOF28, found in Xenopus laevis (African clawed frog).